The primary structure comprises 1045 residues: Endoglucanase B (1045 aa).

The signal sequence occupies residues Met-1 to Ala-33. Residues Ala-34 to Pro-492 are catalytic. Asp-91 functions as the Nucleophile in the catalytic mechanism. Active-site residues include His-410, Asp-449, and Glu-458. In terms of domain architecture, CBM3 spans Asp-493–Thr-642. Linker ('hinge') (Pro-Thr box) regions lie at residues Thr-644–Pro-650, Ala-734–Pro-748, Ala-831–Ala-846, and Ser-931–Pro-944. 3 consecutive Fibronectin type-III domains span residues Thr-653 to Thr-743, Thr-751 to Pro-840, and Val-849 to Val-940. The CBM2 domain occupies Pro-939–Gly-1045. Cysteines 946 and 1044 form a disulfide.

Belongs to the glycosyl hydrolase 9 (cellulase E) family.

The catalysed reaction is Endohydrolysis of (1-&gt;4)-beta-D-glucosidic linkages in cellulose, lichenin and cereal beta-D-glucans.. Functionally, the biological conversion of cellulose to glucose generally requires three types of hydrolytic enzymes: (1) Endoglucanases which cut internal beta-1,4-glucosidic bonds; (2) Exocellobiohydrolases that cut the disaccharide cellobiose from the non-reducing end of the cellulose polymer chain; (3) Beta-1,4-glucosidases which hydrolyze the cellobiose and other short cello-oligosaccharides to glucose. The sequence is that of Endoglucanase B (cenB) from Cellulomonas fimi.